Here is a 257-residue protein sequence, read N- to C-terminus: Imidazole glycerol phosphate synthase subunit HisF (257 aa).

Residues Asp11 and Asp130 contribute to the active site.

Belongs to the HisA/HisF family. Heterodimer of HisH and HisF.

It localises to the cytoplasm. It catalyses the reaction 5-[(5-phospho-1-deoxy-D-ribulos-1-ylimino)methylamino]-1-(5-phospho-beta-D-ribosyl)imidazole-4-carboxamide + L-glutamine = D-erythro-1-(imidazol-4-yl)glycerol 3-phosphate + 5-amino-1-(5-phospho-beta-D-ribosyl)imidazole-4-carboxamide + L-glutamate + H(+). It functions in the pathway amino-acid biosynthesis; L-histidine biosynthesis; L-histidine from 5-phospho-alpha-D-ribose 1-diphosphate: step 5/9. In terms of biological role, IGPS catalyzes the conversion of PRFAR and glutamine to IGP, AICAR and glutamate. The HisF subunit catalyzes the cyclization activity that produces IGP and AICAR from PRFAR using the ammonia provided by the HisH subunit. The chain is Imidazole glycerol phosphate synthase subunit HisF from Vibrio parahaemolyticus serotype O3:K6 (strain RIMD 2210633).